The sequence spans 417 residues: Imidazolonepropionase (417 aa).

Residues histidine 77 and histidine 79 each coordinate Fe(3+). The Zn(2+) site is built by histidine 77 and histidine 79. The 4-imidazolone-5-propanoate site is built by arginine 86, tyrosine 149, and histidine 182. Tyrosine 149 contributes to the N-formimidoyl-L-glutamate binding site. Histidine 247 is a Fe(3+) binding site. Histidine 247 contacts Zn(2+). Residue glutamine 250 coordinates 4-imidazolone-5-propanoate. Aspartate 322 serves as a coordination point for Fe(3+). Aspartate 322 provides a ligand contact to Zn(2+). Positions 324 and 326 each coordinate N-formimidoyl-L-glutamate. Threonine 327 provides a ligand contact to 4-imidazolone-5-propanoate.

This sequence belongs to the metallo-dependent hydrolases superfamily. HutI family. The cofactor is Zn(2+). Fe(3+) is required as a cofactor.

Its subcellular location is the cytoplasm. The catalysed reaction is 4-imidazolone-5-propanoate + H2O = N-formimidoyl-L-glutamate. Its pathway is amino-acid degradation; L-histidine degradation into L-glutamate; N-formimidoyl-L-glutamate from L-histidine: step 3/3. Catalyzes the hydrolytic cleavage of the carbon-nitrogen bond in imidazolone-5-propanoate to yield N-formimidoyl-L-glutamate. It is the third step in the universal histidine degradation pathway. This Cupriavidus necator (strain ATCC 17699 / DSM 428 / KCTC 22496 / NCIMB 10442 / H16 / Stanier 337) (Ralstonia eutropha) protein is Imidazolonepropionase.